A 30-amino-acid chain; its full sequence is Cycloviolacin-O24 (30 aa).

Positions 1–30 (GLPTCGETCFGGTCNTPGCTCDPWPVCTHN) form a cross-link, cyclopeptide (Gly-Asn). Disulfide bonds link C5/C19, C9/C21, and C14/C27.

In terms of processing, this is a cyclic peptide. As to expression, expressed in leaves but not in petals, petioles, roots and runners (at protein level).

Its function is as follows. Probably participates in a plant defense mechanism. Has hemolytic activity. This is Cycloviolacin-O24 from Viola odorata (Sweet violet).